Here is a 122-residue protein sequence, read N- to C-terminus: Large ribosomal subunit protein uL22 (122 aa).

The segment at 102–122 is disordered; that stretch reads VAEGKEMKSSKSHKKNQAEGK.

This sequence belongs to the universal ribosomal protein uL22 family. Part of the 50S ribosomal subunit.

This protein binds specifically to 23S rRNA; its binding is stimulated by other ribosomal proteins, e.g. L4, L17, and L20. It is important during the early stages of 50S assembly. It makes multiple contacts with different domains of the 23S rRNA in the assembled 50S subunit and ribosome. Functionally, the globular domain of the protein is located near the polypeptide exit tunnel on the outside of the subunit, while an extended beta-hairpin is found that lines the wall of the exit tunnel in the center of the 70S ribosome. This is Large ribosomal subunit protein uL22 from Helicobacter pylori (strain HPAG1).